A 358-amino-acid chain; its full sequence is tRNA-specific 2-thiouridylase MnmA (358 aa).

ATP contacts are provided by residues 8 to 15 and Met34; that span reads GMSGGVDS. Cys103 acts as the Nucleophile in catalysis. Cysteines 103 and 199 form a disulfide. Position 127 (Gly127) interacts with ATP. Positions 149–151 are interaction with tRNA; the sequence is KDQ. The active-site Cysteine persulfide intermediate is the Cys199. The interval 305 to 306 is interaction with tRNA; it reads RY.

This sequence belongs to the MnmA/TRMU family.

The protein localises to the cytoplasm. The catalysed reaction is S-sulfanyl-L-cysteinyl-[protein] + uridine(34) in tRNA + AH2 + ATP = 2-thiouridine(34) in tRNA + L-cysteinyl-[protein] + A + AMP + diphosphate + H(+). Functionally, catalyzes the 2-thiolation of uridine at the wobble position (U34) of tRNA, leading to the formation of s(2)U34. The sequence is that of tRNA-specific 2-thiouridylase MnmA from Clostridium beijerinckii (strain ATCC 51743 / NCIMB 8052) (Clostridium acetobutylicum).